The sequence spans 199 residues: Superoxide dismutase [Mn/Fe] (199 aa).

4 residues coordinate Fe(3+): H27, H81, D161, and H165. 4 residues coordinate Mn(2+): H27, H81, D161, and H165.

This sequence belongs to the iron/manganese superoxide dismutase family. In terms of assembly, homodimer. Mn(2+) serves as cofactor. It depends on Fe(3+) as a cofactor.

The catalysed reaction is 2 superoxide + 2 H(+) = H2O2 + O2. Destroys superoxide anion radicals which are normally produced within the cells and which are toxic to biological systems. Catalyzes the dismutation of superoxide anion radicals into O2 and H2O2 by successive reduction and oxidation of the transition metal ion at the active site. In Staphylococcus epidermidis, this protein is Superoxide dismutase [Mn/Fe] (sodA).